The sequence spans 159 residues: Cyclic pyranopterin monophosphate synthase (159 aa).

Residues leucine 75–histidine 77 and methionine 113–glutamate 114 each bind substrate. Aspartate 128 is a catalytic residue.

This sequence belongs to the MoaC family. Homohexamer; trimer of dimers.

It carries out the reaction (8S)-3',8-cyclo-7,8-dihydroguanosine 5'-triphosphate = cyclic pyranopterin phosphate + diphosphate. The protein operates within cofactor biosynthesis; molybdopterin biosynthesis. Its function is as follows. Catalyzes the conversion of (8S)-3',8-cyclo-7,8-dihydroguanosine 5'-triphosphate to cyclic pyranopterin monophosphate (cPMP). This is Cyclic pyranopterin monophosphate synthase from Cupriavidus metallidurans (strain ATCC 43123 / DSM 2839 / NBRC 102507 / CH34) (Ralstonia metallidurans).